A 352-amino-acid chain; its full sequence is MIFKKTILIFIISFFFISISFASSSSSSSSSSSSSSSSWSSSESSSSPAPSKYIYAIAVIENYKQQQFLIIDPWENNTILSESLQLNFEIDDILIVEESNTFIVYSESTNQSLISINPNTLQSKLINKITPPIAGFEDMLQPSVFISEKKVLYKPVVDINGGGELSSLLRLDFESGKGTFVNISNENQISTAGSIPNVAYDQLNDYVFACYNSSNNNVLVAFNETTSDIIETYGILKNIQGFDVTMMFTDKLGNLFLVYQDNSGDVFVCEVDSILMECFGVFKYNIGTVPYAFSPYFLSRDKSSLVFITYIDENQFLLEVVDFNHGFKSKKTIFSNSYLNNPFNVYWVSLTY.

Residues 1-22 form the signal peptide; the sequence is MIFKKTILIFIISFFFISISFA. Residues 25–47 are compositionally biased toward low complexity; it reads SSSSSSSSSSSSSSWSSSESSSS. The disordered stretch occupies residues 25 to 49; sequence SSSSSSSSSSSSSSWSSSESSSSPA. N-linked (GlcNAc...) asparagine glycans are attached at residues asparagine 76, asparagine 110, asparagine 182, asparagine 212, and asparagine 223.

The protein resides in the secreted. This is an uncharacterized protein from Dictyostelium discoideum (Social amoeba).